The following is a 308-amino-acid chain: tRNA pseudouridine synthase B (308 aa).

Residue D49 is the Nucleophile of the active site.

This sequence belongs to the pseudouridine synthase TruB family. Type 1 subfamily.

The catalysed reaction is uridine(55) in tRNA = pseudouridine(55) in tRNA. Functionally, responsible for synthesis of pseudouridine from uracil-55 in the psi GC loop of transfer RNAs. The chain is tRNA pseudouridine synthase B from Corynebacterium jeikeium (strain K411).